The sequence spans 955 residues: Reversion-inducing cysteine-rich protein with Kazal motifs (955 aa).

A signal peptide spans 1–22 (MSGCLQILTVLLCCRFWALVFS). The stretch at 28–75 (CVHHAADIPRCRDACEQLASIRSESRLRHLLHRLPSYCPETLSELWIC) is one Knot 1 repeat. Residues 28–326 (CVHHAADIPR…NPVEMDLITC (299 aa)) are 5 X Knot repeats. The N-linked (GlcNAc...) asparagine glycan is linked to Asn-77. 2 Knot repeats span residues 95–132 (CCELAISAECRRDCKQASSKNDISKVCKKDTENPLYSC) and 142–188 (CCSY…LILC). Asn-191 carries an N-linked (GlcNAc...) asparagine glycan. 2 Knot repeats span residues 207–254 (CCDR…LWQC) and 282–326 (CCFK…LITC). 2 N-linked (GlcNAc...) asparagine glycosylation sites follow: Asn-287 and Asn-375. Kazal-like domains follow at residues 615-661 (LFTG…SCRS), 686-741 (DLSE…HCQD), and 742-778 (ACRRPREVCAHNGESYSTVCEAFSERVAVDYQGRCHA). Cystine bridges form between Cys-621–Cys-646, Cys-623–Cys-642, Cys-631–Cys-659, Cys-704–Cys-724, and Cys-713–Cys-739. Ser-931 carries the GPI-anchor amidated serine lipid modification. Residues 932–955 (SCVSISVCVLLLLCSLILTLTSDL) constitute a propeptide that is removed on maturation.

The protein belongs to the RECK family. In terms of assembly, interacts (via knot repeats) with wnt7a (via disordered linker region); the interaction is direct. Interacts (via knot repeats) with wnt7b (via disordered linker region); the interaction is direct. Interacts with adgra2; the interaction is direct. In terms of tissue distribution, expressed in the cerebral endothelium.

The protein localises to the cell membrane. Functionally, functions together with adgra2 to enable brain endothelial cells to selectively respond to Wnt7 signals (wnt7a or wnt7b). Plays a key role in Wnt7-specific responses: required for central nervous system (CNS) angiogenesis and blood-brain barrier regulation. Acts as a Wnt7-specific coactivator of canonical Wnt signaling by decoding Wnt ligands: acts by interacting specifically with the disordered linker region of Wnt7, thereby conferring ligand selectivity for Wnt7. Adgra2 is then required to deliver reck-bound Wnt7 to frizzled by assembling a higher-order RECK-ADGRA2-Fzd-LRP5-LRP6 complex. Also acts as a serine protease inhibitor. The polypeptide is Reversion-inducing cysteine-rich protein with Kazal motifs (Danio rerio (Zebrafish)).